The primary structure comprises 68 residues: Probable Sec-independent protein translocase protein TatE (68 aa).

Residues 1-21 form a helical membrane-spanning segment; it reads MGEISITKLLVVAALIILVFG. A disordered region spans residues 43–68; that stretch reads MNEDDDSAKKTTAEEEAPAQKLSHKE.

Belongs to the TatA/E family. TatE subfamily.

It is found in the cell inner membrane. In terms of biological role, part of the twin-arginine translocation (Tat) system that transports large folded proteins containing a characteristic twin-arginine motif in their signal peptide across membranes. TatE shares overlapping functions with TatA. The chain is Probable Sec-independent protein translocase protein TatE from Klebsiella pneumoniae subsp. pneumoniae (strain ATCC 700721 / MGH 78578).